The chain runs to 55 residues: Sporulation killing factor (55 aa).

Positions 1–29 (MKRNQKEWESVSKKGLMKPGGTSIVKAAG) are excised as a propeptide. A disulfide bridge links C30 with C45. Positions 30-55 (CMGCWASKSIAMTRVCALPHPAMRAI) form a cross-link, cyclopeptide (Cys-Ile). Positions 33–41 (CWASKSIAM) form a cross-link, 2-(S-cysteinyl)-methionine (Cys-Met).

Post-translationally, this is a cyclic peptide. The first step in SKF maturation is probably thioether bond formation.

It localises to the secreted. Functionally, produces a 26-residue extracellular sporulation killing factor (SKF) that induces the lysis of other B.subtilis cells that have not entered the sporulation pathway, providing a source of nutrients to support sporulation, and at the same time delaying commitment to the energetically expensive and irreversible onset of sporulation. Can also inhibit growth of other bacteria at high concentrations. Addition of SKF to solid cultures induces killing, but it is much less effective than SDP (AC O34344). Has a role in protecting the secreted lipase LipA against proteolysis, either by modulating its folding or by acting as a protease inhibitor. This Bacillus subtilis (strain 168) protein is Sporulation killing factor.